Here is a 666-residue protein sequence, read N- to C-terminus: DNA-directed RNA polymerase subunit beta' (666 aa).

Positions 69, 71, 87, and 90 each coordinate Zn(2+). The Mg(2+) site is built by Asp-489, Asp-491, and Asp-493.

The protein belongs to the RNA polymerase beta' chain family. RpoC1 subfamily. As to quaternary structure, in plastids the minimal PEP RNA polymerase catalytic core is composed of four subunits: alpha, beta, beta', and beta''. When a (nuclear-encoded) sigma factor is associated with the core the holoenzyme is formed, which can initiate transcription. It depends on Mg(2+) as a cofactor. Zn(2+) is required as a cofactor.

It is found in the plastid. Its subcellular location is the chloroplast. The enzyme catalyses RNA(n) + a ribonucleoside 5'-triphosphate = RNA(n+1) + diphosphate. DNA-dependent RNA polymerase catalyzes the transcription of DNA into RNA using the four ribonucleoside triphosphates as substrates. The protein is DNA-directed RNA polymerase subunit beta' of Chara vulgaris (Common stonewort).